The primary structure comprises 420 residues: Glutamyl-tRNA reductase (420 aa).

Residues 49–52 (TCNR), Ser-110, 115–117 (EHQ), and Gln-121 contribute to the substrate site. The Nucleophile role is filled by Cys-50. An NADP(+)-binding site is contributed by 190 to 195 (GSGTIN).

Belongs to the glutamyl-tRNA reductase family. In terms of assembly, homodimer.

The enzyme catalyses (S)-4-amino-5-oxopentanoate + tRNA(Glu) + NADP(+) = L-glutamyl-tRNA(Glu) + NADPH + H(+). The protein operates within porphyrin-containing compound metabolism; protoporphyrin-IX biosynthesis; 5-aminolevulinate from L-glutamyl-tRNA(Glu): step 1/2. In terms of biological role, catalyzes the NADPH-dependent reduction of glutamyl-tRNA(Glu) to glutamate 1-semialdehyde (GSA). The protein is Glutamyl-tRNA reductase of Wigglesworthia glossinidia brevipalpis.